Reading from the N-terminus, the 504-residue chain is Pentatricopeptide repeat-containing protein At5g16640, mitochondrial (504 aa).

Residues 1–43 (MRRSISSKAKSFLHRNLLYSGNSGTSPSSSFSICGFCFSRRAY) constitute a mitochondrion transit peptide. PPR repeat units follow at residues 45–79 (NGSD…RPLP), 80–114 (SIAD…GIPH), 115–149 (NLCT…GHEP), 150–184 (SIVT…GYKP), 185–219 (NVVI…GIGP), 220–254 (DVVT…EIYP), 255–289 (DVFT…SLDP), 290–324 (DIVT…GCFP), 325–359 (DVVT…GVVR), 360–394 (NTVT…GVHP), 395–429 (NIIT…GMDA), 430–464 (DIVT…GLMP), and 465–499 (DIWT…GILP).

This sequence belongs to the PPR family. P subfamily.

It localises to the mitochondrion. This chain is Pentatricopeptide repeat-containing protein At5g16640, mitochondrial, found in Arabidopsis thaliana (Mouse-ear cress).